The sequence spans 135 residues: UPF0738 protein Aflv_2116 (135 aa).

This sequence belongs to the UPF0738 family.

This Anoxybacillus flavithermus (strain DSM 21510 / WK1) protein is UPF0738 protein Aflv_2116.